The sequence spans 339 residues: Lymphocyte-specific protein 1 (339 aa).

The segment at 1 to 198 is disordered; the sequence is MAEASSDPGA…SPPLSPTTKL (198 aa). Ser-24 carries the phosphoserine modification. Composition is skewed to basic and acidic residues over residues 32 to 43 and 51 to 61; these read VHEQCQHERDRQ and GGGHVPERPKQ. Ser-111 carries the post-translational modification Phosphoserine. Positions 117-140 are enriched in basic and acidic residues; sequence EDRPGLHAYEKEDSDEVHLEELSL. Thr-175 bears the Phosphothreonine mark. Phosphoserine occurs at positions 177, 188, 189, and 193. The span at 185 to 196 shows a compositional bias: polar residues; that stretch reads IEQSSPPLSPTT. A Phosphoserine; by MAPKAPK2 modification is found at Ser-252. The interval 294-315 is disordered; that stretch reads KSLWEQKGGSKTSSTIKSTPSG. The span at 300 to 315 shows a compositional bias: low complexity; sequence KGGSKTSSTIKSTPSG. Lys-327 carries the N6-acetyllysine modification.

Binds actin. Post-translationally, phosphorylated by casein kinase II, protein kinase C and MAPKAPK2. Phosphorylation by PKC induces translocation from membrane to cytoplasm. Phosphorylation by MAPKAPK2 may regulate neutrophil chemotaxis. Activated T-lymphocytes.

It is found in the cell membrane. Its function is as follows. May play a role in mediating neutrophil activation and chemotaxis. This chain is Lymphocyte-specific protein 1 (LSP1), found in Homo sapiens (Human).